Consider the following 238-residue polypeptide: Type III pantothenate kinase (238 aa).

ATP is bound at residue 6 to 13 (DSGNTRIK). Substrate-binding positions include Y90 and 97–100 (GVDR). The active-site Proton acceptor is D99. T122 is a binding site for ATP. T172 contributes to the substrate binding site.

This sequence belongs to the type III pantothenate kinase family. As to quaternary structure, homodimer. NH4(+) is required as a cofactor. K(+) serves as cofactor.

It localises to the cytoplasm. The enzyme catalyses (R)-pantothenate + ATP = (R)-4'-phosphopantothenate + ADP + H(+). Its pathway is cofactor biosynthesis; coenzyme A biosynthesis; CoA from (R)-pantothenate: step 1/5. Functionally, catalyzes the phosphorylation of pantothenate (Pan), the first step in CoA biosynthesis. This chain is Type III pantothenate kinase, found in Dechloromonas aromatica (strain RCB).